Consider the following 418-residue polypeptide: Endoglucanase EG-II (418 aa).

A signal peptide spans 1–21; that stretch reads MNKSVAPLLLAASILYGGAAA. Pyrrolidone carboxylic acid is present on glutamine 22. A CBM1 domain is found at 22-57; sequence QQTVWGQCGGIGWSGPTNCAPGSACSTLNPYYAQCI. Residues 58 to 91 are linker; the sequence is PGATTITTSTRPPSGPTTTTRATSTSSSTPPTSS. The tract at residues 63-91 is disordered; that stretch reads ITTSTRPPSGPTTTTRATSTSSSTPPTSS. The interval 92–418 is catalytic; that stretch reads GVRFAGVNIA…SLVSSCLARK (327 aa). Cysteine 107 and cysteine 113 form a disulfide bridge. An N-linked (GlcNAc) asparagine glycan is attached at asparagine 124. Cysteines 183 and 190 form a disulfide. The active-site Proton donor/acceptor is glutamate 239. Intrachain disulfides connect cysteine 323–cysteine 359 and cysteine 364–cysteine 414. Glutamate 350 functions as the Nucleophile in the catalytic mechanism.

It belongs to the glycosyl hydrolase 5 (cellulase A) family.

The protein localises to the secreted. It catalyses the reaction Endohydrolysis of (1-&gt;4)-beta-D-glucosidic linkages in cellulose, lichenin and cereal beta-D-glucans.. Its function is as follows. Endoglucanase (EG) that cleaves the internal beta-1,4-glucosidic bonds in cellulose. The degradation of cellulose involves an interplay between different cellulolytic enzymes. Hydrolysis starts with EGs, which cut internal glycosidic linkages to reduce the polymerization degree of the substrate and creates new chain ends for exocellobiohydrolases (CBHs). The CBH release the disaccharide cellobiose from the non-reducing end of the cellulose polymer chain. Finally, beta-1,4-glucosidases hydrolyze the cellobiose and other short cello-oligosaccharides into glucose units. This chain is Endoglucanase EG-II (egl2), found in Hypocrea jecorina (strain ATCC 56765 / BCRC 32924 / NRRL 11460 / Rut C-30) (Trichoderma reesei).